Reading from the N-terminus, the 741-residue chain is DNA ligase (741 aa).

NAD(+) is bound by residues Asp-78–Asp-82, Ser-127–Leu-128, and Glu-161. The active-site N6-AMP-lysine intermediate is the Lys-163. NAD(+) contacts are provided by Arg-184, Glu-219, Lys-335, and Lys-359. Residues Cys-464, Cys-467, Cys-482, and Cys-488 each contribute to the Zn(2+) site. Residues Val-662–Ala-741 enclose the BRCT domain.

Belongs to the NAD-dependent DNA ligase family. LigA subfamily. Mg(2+) is required as a cofactor. Mn(2+) serves as cofactor.

It catalyses the reaction NAD(+) + (deoxyribonucleotide)n-3'-hydroxyl + 5'-phospho-(deoxyribonucleotide)m = (deoxyribonucleotide)n+m + AMP + beta-nicotinamide D-nucleotide.. Its function is as follows. DNA ligase that catalyzes the formation of phosphodiester linkages between 5'-phosphoryl and 3'-hydroxyl groups in double-stranded DNA using NAD as a coenzyme and as the energy source for the reaction. It is essential for DNA replication and repair of damaged DNA. The polypeptide is DNA ligase (Dinoroseobacter shibae (strain DSM 16493 / NCIMB 14021 / DFL 12)).